The primary structure comprises 112 residues: MSAESPEPASAEEQKEMEDKVISPEKAEEAKLKARYPHLGQKPGGSDFLRKRLQKGQKYFDSGDYNMAKAKMKNKQLPTAAPDKTEVTGDHIPTPQDLPQRKPSLVASKLAG.

Residues 1 to 11 (MSAESPEPASA) show a composition bias toward low complexity. A disordered region spans residues 1–48 (MSAESPEPASAEEQKEMEDKVISPEKAEEAKLKARYPHLGQKPGGSDF). At Ser2 the chain carries N-acetylserine. Residues 12–32 (EEQKEMEDKVISPEKAEEAKL) show a composition bias toward basic and acidic residues. Ser62 and Ser104 each carry phosphoserine; by GWL. The interval 73–112 (KNKQLPTAAPDKTEVTGDHIPTPQDLPQRKPSLVASKLAG) is disordered. Ser104 carries the phosphoserine; by PKA modification.

It belongs to the endosulfine family. As to quaternary structure, interacts (when phosphorylated at Ser-62) with PPP2R2D. Post-translationally, phosphorylation at Ser-62 by MASTL/GWL during mitosis is essential for interaction with PPP2R2D (PR55-delta) and subsequent inactivation of PP2A.

Its subcellular location is the cytoplasm. Functionally, protein phosphatase inhibitor that specifically inhibits protein phosphatase 2A (PP2A) during mitosis. Inhibition of PP2A is enhanced when ARPP19 is phosphorylated. When phosphorylated at Ser-62 during mitosis, specifically interacts with PPP2R2D (PR55-delta) and inhibits its activity, leading to inactivation of PP2A, an essential condition to keep cyclin-B1-CDK1 activity high during M phase. The polypeptide is cAMP-regulated phosphoprotein 19 (ARPP19) (Gallus gallus (Chicken)).